The primary structure comprises 297 residues: AKT-interacting protein (297 aa).

Positions M1–T13 are enriched in polar residues. A disordered region spans residues M1–L45. Positions G25–S39 are enriched in low complexity. The UBC core domain occupies Y79–S227. A disordered region spans residues K262–N297.

Belongs to the ubiquitin-conjugating enzyme family. FTS subfamily.

It is found in the cytoplasm. It localises to the cell membrane. In terms of biological role, may function to promote vesicle trafficking and/or fusion. May also regulate apoptosis. This Salmo salar (Atlantic salmon) protein is AKT-interacting protein (aktip).